A 656-amino-acid chain; its full sequence is MHWNIISKEQSSSSVSLPTLDSSEPCHIEVILRAIPEKGLQNNESTFKIDPYENTVLFRTNNPLHETTKETHSTFQFDKVFDANATQEDVQKFLVHPIINDVLNGYNGTVITYGPSFSGKSYSLIGSKESEGILPNICKTLFDTLEKNEETKGDSFSVSVLAFEIYMEKTYDLLVPLPERKPLKLHRSSSKMDLEIKDICPAHVGSYEDLRSYIQAVQNVGNRMACGDKTERSRSHLVFQLHVEQRNRKDDILKNSSLYLVDLHGAEKFDKRTESTLSQDALKKLNQSIEALKNTVRSLSMKERDSAYSAKGSHSSAYRESQLTEVLKDSLGGNRKTKVILTCFLSNVPTTLSTLEFGDSIRQINNKVTDNTTGLNLKKKMDLFIQDMKIKDDNYVAQINILKAEIDSLKSLHNKSLPEDDEKKMLENTKKENIKLKLQLDSITQLLSSSTNEDPNNRIDEEVSEILTKRCEQIAQLELSFDRQMNSNSKLQQELEYKKSKEEALESMNVRLLEQIQLQEREIQELLTTNAILKGELETHTKLTETRSERIKSLESSVKELSLNKSAIPSPRRGSMSSSSGNTMLHIEEGSEISNSPWSANTSSKPLVWGARKVSSSSIATTGSQESFVARPFKKGLNLHSIKVTSSTPKSPSSGS.

Residues 27 to 364 form the Kinesin motor domain; the sequence is HIEVILRAIP…LEFGDSIRQI (338 aa). 114 to 121 lines the ATP pocket; that stretch reads GPSFSGKS. Residue T583 is modified to Phosphothreonine.

The protein belongs to the TRAFAC class myosin-kinesin ATPase superfamily. Kinesin family.

The protein localises to the cytoplasm. It is found in the cytoskeleton. In terms of biological role, possible microtubule-based motor that can interact or substitute with myosin 2 (MYO2). This chain is Kinesin-related protein SMY1 (SMY1), found in Saccharomyces cerevisiae (strain ATCC 204508 / S288c) (Baker's yeast).